The primary structure comprises 437 residues: MVKKLGLNFKNTKTSVSELKQRIVFLIVAIIVFRIGSFIPIPGIDTTILSKILNNQNGTIVDMFNMFSGGALSRASIFALGIMPYISASIIIQLLTLVYPTLSEIKKEGESGRHRINQYTRYATLILALVQSIGIAMTLPNIAGIRSIIINTDFYFYLIAIISLVTSTMFLMWLGELITEYGIGNGISIIIFIGIIAGLPSAIGNTIEKTRQGDLHILLFLFILLLIFSVIFLVVFMERGQRKIVVHYAQRQQGRRIYETPSTHLPLKINMAGVIPAIFASSIVLFPATIISWCKVNHEWLTKILFYLQPNQFLYLILYISAIVFFCFFYTGLVFNPRETADNLKKSGAFISGIRPGEQTAKYINKIMLRLTLVGSLYITFICLIPEFMRSAMNVPFYFGGTSLLIVVVVIIDFITQIQTLIMSNQYESMLKKANLN.

Helical transmembrane passes span 23–43 (IVFL…PIPG), 77–97 (IFAL…LLTL), 125–145 (LILA…IAGI), 154–174 (FYFY…LMWL), 183–203 (IGNG…PSAI), 217–237 (ILLF…VVFM), 271–291 (MAGV…ATII), 315–335 (YLIL…GLVF), 367–387 (IMLR…LIPE), and 395–415 (VPFY…IDFI).

It belongs to the SecY/SEC61-alpha family. As to quaternary structure, component of the Sec protein translocase complex. Heterotrimer consisting of SecY, SecE and SecG subunits. The heterotrimers can form oligomers, although 1 heterotrimer is thought to be able to translocate proteins. Interacts with the ribosome. Interacts with SecDF, and other proteins may be involved. Interacts with SecA.

It localises to the cell membrane. In terms of biological role, the central subunit of the protein translocation channel SecYEG. Consists of two halves formed by TMs 1-5 and 6-10. These two domains form a lateral gate at the front which open onto the bilayer between TMs 2 and 7, and are clamped together by SecE at the back. The channel is closed by both a pore ring composed of hydrophobic SecY resides and a short helix (helix 2A) on the extracellular side of the membrane which forms a plug. The plug probably moves laterally to allow the channel to open. The ring and the pore may move independently. The polypeptide is Protein translocase subunit SecY (Buchnera aphidicola subsp. Acyrthosiphon pisum (strain APS) (Acyrthosiphon pisum symbiotic bacterium)).